The primary structure comprises 526 residues: MTYLLNERICALFRSNWQHTLTYWSVFFSFGLCVAFLGPTILDLRCQTQSTLQEITLVFFSQQFFLFLGSTIGGFFSKTLVSSLSSLAVSTLIISVVFAIIPLCRELLMLAFAMAVSGLAMGTIDTISNLQLVKIYQKDSTVFLQALHFFVGLGALVSPLIADPFLSDTSCVIGNSSVNTTSLEDLRNKLAGRHVHNVSNVHLHTDGEVVTNVSYAFWIMAIINLPVPIAIFVLVYRERLFMCGSDPSRRLLDGDVLAIKPRGTSILAEDTGQKETSNSHADLFSCCLLGKAHSFPLSFFGIHVLGGLVLFFSDGIVGSYTGFVYTYAVAPPMNLPHKTAGYLTCIFWAAITTGRLSAIPLSYRFKPVRLLIVSQVGVIVTVLLLLIFSNSSVFLFIGTCCLGLFISSIFPCMLALTEDILEYKGCATTVLVTSAGMGEMVLQVLVGSVMHSRGSFSFLLCGMIFGCLGFTFFTFLYFVQQSHKSYTEALPGNSPVERHEENGIKTCSAAVLNSWDAPEHKTSLDP.

Helical transmembrane passes span 21 to 41, 55 to 75, 84 to 104, 107 to 127, 142 to 162, 215 to 235, 297 to 317, 341 to 361, 377 to 397, 401 to 421, 430 to 450, and 458 to 478; these read LTYWSVFFSFGLCVAFLGPTI, ITLVFFSQQFFLFLGSTIGGF, LSSLAVSTLIISVVFAIIPLC, LLMLAFAMAVSGLAMGTIDTI, VFLQALHFFVGLGALVSPLIA, YAFWIMAIINLPVPIAIFVLV, LSFFGIHVLGGLVLFFSDGIV, GYLTCIFWAAITTGRLSAIPL, GVIVTVLLLLIFSNSSVFLFI, CLGLFISSIFPCMLALTEDIL, VLVTSAGMGEMVLQVLVGSVM, and FLLCGMIFGCLGFTFFTFLYF.

Belongs to the major facilitator superfamily.

It is found in the membrane. The chain is Major facilitator superfamily domain-containing protein 4A (mfsd4a) from Danio rerio (Zebrafish).